Reading from the N-terminus, the 252-residue chain is Triosephosphate isomerase (252 aa).

10 to 12 (NWK) lines the substrate pocket. His96 acts as the Electrophile in catalysis. The active-site Proton acceptor is the Glu168. Substrate contacts are provided by residues Gly174, Ser214, and 235-236 (GG).

The protein belongs to the triosephosphate isomerase family. As to quaternary structure, homodimer.

It localises to the cytoplasm. It carries out the reaction D-glyceraldehyde 3-phosphate = dihydroxyacetone phosphate. The protein operates within carbohydrate biosynthesis; gluconeogenesis. Its pathway is carbohydrate degradation; glycolysis; D-glyceraldehyde 3-phosphate from glycerone phosphate: step 1/1. Its function is as follows. Involved in the gluconeogenesis. Catalyzes stereospecifically the conversion of dihydroxyacetone phosphate (DHAP) to D-glyceraldehyde-3-phosphate (G3P). This is Triosephosphate isomerase from Streptococcus agalactiae serotype Ia (strain ATCC 27591 / A909 / CDC SS700).